A 1187-amino-acid polypeptide reads, in one-letter code: Myelin transcription factor 1-like protein (1187 aa).

Residues 1–22 (MDVDSEEKRHRTRSKGVRVPVE) form a disordered region. A CCHHC-type 1 zinc finger spans residues 22–65 (EPAIQELFSCPTPGCDGSGHVSGKYARHRSVYGCPLAKKRKTQD). Zn(2+) contacts are provided by cysteine 31, cysteine 36, histidine 49, and cysteine 55. Disordered regions lie at residues 56–178 (PLAK…QMSC) and 221–248 (RTES…GRKS). A compositionally biased stretch (acidic residues) spans 89–172 (ECYESDGTED…EEEEEEEENE (84 aa)). Serine 251 is subject to Phosphoserine. 2 disordered regions span residues 343 to 422 (SETN…DRSE) and 450 to 514 (REKM…GCDG). The segment covering 344–358 (ETNPQDRSQPPNMSV) has biased composition (polar residues). Basic and acidic residues-rich tracts occupy residues 362 to 377 (VRQE…DRSY), 401 to 412 (AKEDGCHERDDD), 450 to 488 (REKM…DSHV), and 496 to 506 (DPSRTEKRESK). CCHHC-type zinc fingers lie at residues 498–541 (SRTE…PPEI) and 542–585 (LAMH…KLAK). 8 residues coordinate Zn(2+): cysteine 507, cysteine 512, histidine 525, cysteine 531, cysteine 551, cysteine 556, histidine 569, and cysteine 575. Positions 686–710 (ASPSSSTTSSYAPSSSSNLSCGGGS) are disordered. CCHHC-type zinc fingers lie at residues 897–940 (LATS…GIRI), 946–989 (DKED…QKDG), and 999–1042 (KSVK…MKKA). Residues cysteine 906, cysteine 911, histidine 924, cysteine 930, cysteine 955, cysteine 960, histidine 973, cysteine 979, cysteine 1008, cysteine 1013, histidine 1026, and cysteine 1032 each coordinate Zn(2+). Positions 1058-1132 (NGIENDEEIK…ANLSQSLIHS (75 aa)) form a coiled coil.

Belongs to the MYT1 family. Interacts with SIN3B. As to expression, brain.

It is found in the nucleus. The protein resides in the chromosome. Its function is as follows. Transcription factor that plays a key role in neuronal differentiation by specifically repressing expression of non-neuronal genes during neuron differentiation. In contrast to other transcription repressors that inhibit specific lineages, mediates repression of multiple differentiation programs. Also represses expression of negative regulators of neurogenesis, such as members of the Notch signaling pathway, including HES1. The combination of three transcription factors, ASCL1, POU3F2/BRN2 and MYT1L, is sufficient to reprogram fibroblasts and other somatic cells into induced neuronal (iN) cells in vitro. Directly binds the 5'-AAGTT-3' core motif present on the promoter of target genes and represses transcription by recruiting a multiprotein complex containing SIN3B. The 5'-AAGTT-3' core motif is absent from the promoter of neural genes. The protein is Myelin transcription factor 1-like protein of Mus musculus (Mouse).